A 1742-amino-acid polypeptide reads, in one-letter code: Complement C4 (1742 aa).

A signal peptide spans 1 to 19 (MRLLWGLLWAFGLFASSLQ). N-linked (GlcNAc...) asparagine glycosylation occurs at Asn-60. Residues Cys-68 and Cys-97 are joined by a disulfide bond. Asn-226 carries N-linked (GlcNAc...) asparagine glycosylation. A disulfide bridge connects residues Cys-634 and Cys-668. The propeptide occupies 675-678 (RKKR). 3 disulfide bridges follow: Cys-701-Cys-727, Cys-702-Cys-734, and Cys-715-Cys-735. The region spanning 701–735 (CCQDGLTRLPMVRSCEQRAARVLQPACREPFLSCC) is the Anaphylatoxin-like domain. Residue Asn-861 is glycosylated (N-linked (GlcNAc...) asparagine). Residues 1007–1010 (CGEQ) constitute a cross-link (isoglutamyl cysteine thioester (Cys-Gln)). N-linked (GlcNAc...) asparagine glycans are attached at residues Asn-1325 and Asn-1388. Sulfotyrosine is present on residues Tyr-1414, Tyr-1418, and Tyr-1420. The propeptide occupies 1445–1451 (RRNRRRR). 5 cysteine pairs are disulfide-bonded: Cys-1469–Cys-1533, Cys-1581–Cys-1586, Cys-1593–Cys-1671, Cys-1616–Cys-1740, and Cys-1716–Cys-1725. The NTR domain maps to 1593 to 1740 (CPRQRRALER…FIQEYSTLGC (148 aa)).

As to quaternary structure, in absence of complement activation, circulates in blood as a disulfide-linked trimer of an alpha, beta and gamma chain. Complement C4b is composed of complement C4b-A, complement C4 beta and complement C4 gamma chains that are associated via disulfide bonds. Non-enzymatic component of the C3 convertase, also named C4bC2b, composed of the serine protease complement C2b (C2), as well as complement C4b. Non-enzymatic component of the C5 convertase, also named C4bC2bC3b, composed of the serine protease complement C2b (C2), complement C3b, as well as complement C4b. In terms of processing, prior to secretion, the single-chain precursor is enzymatically cleaved by plasminogen (PLG) to yield non-identical chains alpha, beta and gamma. During activation of the complement systems, the alpha chain is cleaved into C4a and C4b by different proteases depending on the complement pathway: C4b stays linked to the beta and gamma chains, while C4a is released in the plasma. The alpha chain is cleaved by C1S to generate C4a and C4b following activation by the classical complement system. The alpha chain is cleaved to generate C4a and C4b by MASP2 following activation by the lectin complement system. The alpha chain is cleaved by GZMK to generate C4a and C4b following activation by the GZMK complement system. Further degradation of C4b by C1 into the inactive fragments C4c and C4d blocks the generation of C3 convertase. The proteolytic cleavages often are incomplete so that many structural forms can be found in plasma. Post-translationally, upon activation, the internal thioester bond reacts with carbohydrate antigens on the target surface to form amide or ester bonds, leading to covalent association with the surface of pathogens. Complement C4b interacts with complement C3b via a thioester linkage. In terms of processing, N- and O-glycosylated. O-glycosylated with a core 1 or possibly core 8 glycan.

It localises to the secreted. Its subcellular location is the cell surface. Functionally, precursor of non-enzymatic components of the classical, lectin and GZMK complement pathways, which consist in a cascade of proteins that leads to phagocytosis and breakdown of pathogens and signaling that strengthens the adaptive immune system. Its function is as follows. Non-enzymatic component of C3 and C5 convertases. Generated following cleavage by complement proteases (C1S, MASP2 or GZMK, depending on the complement pathway), it covalently attaches to the surface of pathogens, where it acts as an opsonin that marks the surface of antigens for removal. It then recruits the serine protease complement C2b to form the C3 and C5 convertases, which cleave and activate C3 and C5, respectively, the next components of the complement pathways. Complement C4b-A isotype is responsible for effective binding to form amide bonds with immune aggregates or protein antigens, while complement C4b-B isotype catalyzes the transacylation of the thioester carbonyl group to form ester bonds with carbohydrate antigens. In terms of biological role, putative humoral mediator released following cleavage by complement proteases (C1S, MASP2 or GZMK, depending on the complement pathway). While it is strongly similar to anaphylatoxins, its role is unclear. Was reported to act as a mediator of local inflammatory process; however these effects were probably due to contamination with C3a and/C5a anaphylatoxins in biological assays. This is Complement C4 from Cavia porcellus (Guinea pig).